The primary structure comprises 848 residues: Beta-galactosidase 11 (848 aa).

An N-terminal signal peptide occupies residues 1–23; sequence MSAAAVLAVVAAAVAALAAAASG. N29 is a glycosylation site (N-linked (GlcNAc...) asparagine). E189 acts as the Proton donor in catalysis. E260 serves as the catalytic Nucleophile. Residues N261, N472, and N783 are each glycosylated (N-linked (GlcNAc...) asparagine). One can recognise an SUEL-type lectin domain in the interval 750 to 837; sequence GGLKPTAVLS…GTLAVQAKCS (88 aa).

It belongs to the glycosyl hydrolase 35 family.

It is found in the secreted. Its subcellular location is the extracellular space. It localises to the apoplast. It catalyses the reaction Hydrolysis of terminal non-reducing beta-D-galactose residues in beta-D-galactosides.. This Oryza sativa subsp. japonica (Rice) protein is Beta-galactosidase 11.